Consider the following 1852-residue polypeptide: Dihydropyridine-sensitive L-type skeletal muscle calcium channel subunit alpha-1 (1852 aa).

Residues 1–70 lie on the Cytoplasmic side of the membrane; the sequence is MESGSGGGGG…KTCINIVEWK (70 aa). The stretch at 57-354 is one I repeat; it reads NPFRKTCINI…LVLGALSGEF (298 aa). The helical transmembrane segment at 71–86 threads the bilayer; sequence PFEIIILLTIFANCVA. At 87-107 the chain is on the extracellular side; that stretch reads LAVFLPMPEEDTNNTNLTLES. Asn99 and Asn102 each carry an N-linked (GlcNAc...) asparagine glycan. A helical membrane pass occupies residues 108–127; that stretch reads LEYIFLVIFTLECFLKIVAY. Residues 128-139 are Cytoplasmic-facing; that stretch reads GLLFHEGAYLRN. The chain crosses the membrane as a helical span at residues 140–155; the sequence is CWNILDFVIVFMGLFT. At 156 to 176 the chain is on the extracellular side; it reads LVVDTINTIAGVPTEKGGGFD. Residues 177–195 traverse the membrane as a helical segment; sequence MKALRAFRVLRPLRLVSGV. The Cytoplasmic portion of the chain corresponds to 196–214; it reads PSLQVVMSSILKSMLPLFH. The chain crosses the membrane as a helical span at residues 215 to 234; sequence IALLVFFMVHIYAIMGLELF. The Extracellular portion of the chain corresponds to 235 to 326; it reads KCKMHKTCYY…WINDAMGNDW (92 aa). An N-linked (GlcNAc...) asparagine glycan is attached at Asn274. The helical transmembrane segment at 327 to 351 threads the bilayer; the sequence is PWIYFLTLILVGSFFILNLVLGALS. Residues 352–447 are Cytoplasmic-facing; that stretch reads GEFTKEREES…RKCHVWVKSK (96 aa). A binding to the beta subunit region spans residues 374–391; the sequence is QQMDEDLEGYMEWITHAE. The II repeat unit spans residues 433-679; sequence NVVLRRKCHV…VFLAIAVDNL (247 aa). A helical membrane pass occupies residues 448–466; the sequence is FFNWWVLLVVLLNTLVIAM. The Extracellular portion of the chain corresponds to 467 to 481; that stretch reads EHHNQTEGLTSFQDT. Residue Asn470 is glycosylated (N-linked (GlcNAc...) asparagine). Residues 482 to 501 form a helical membrane-spanning segment; that stretch reads ANVILLACFTIEMVMKMYAF. At 502 to 509 the chain is on the cytoplasmic side; it reads GPRAYFMS. Residues 510-528 traverse the membrane as a helical segment; it reads IFNRFDCFVVTIGILEIIL. The Extracellular segment spans residues 529–538; it reads VVSNIMTPLG. Residues 539 to 557 form a helical membrane-spanning segment; that stretch reads ISVMRCIRLLRLFKLTRYW. The Cytoplasmic portion of the chain corresponds to 558–576; sequence TSLNNLVASLLNSVKSIAS. A helical membrane pass occupies residues 577-596; the sequence is LLLLLFLFIVIFALLGMQVF. The Extracellular segment spans residues 597-651; the sequence is GGKFNFPDRVIQRSNFDNFPQALISVFQVLTGEEWDSIMYNGIMAHGGPQSPGIL. The helical transmembrane segment at 652–675 threads the bilayer; that stretch reads VSIYFIILYVCGNFVLLNVFLAIA. Residues 676 to 815 are Cytoplasmic-facing; the sequence is VDNLAEAESL…KLCHRIVNHT (140 aa). An III repeat occupies 802–1084; the sequence is HKFRKLCHRI…IFVGFVIVTF (283 aa). Residues 816-834 traverse the membrane as a helical segment; it reads TFTNIILLFILLSSISLAA. Topologically, residues 835–850 are extracellular; sequence EDPIDPRSFRNKVLAY. A helical transmembrane segment spans residues 851-870; the sequence is ADIVFTTVFTIEIVLKMTVY. At 871–882 the chain is on the cytoplasmic side; sequence GAFLHTGSFCRN. The helical transmembrane segment at 883 to 901 threads the bilayer; that stretch reads SFNILDLIVVGVSLLSMGM. Residues 902-908 are Extracellular-facing; the sequence is ESSTISV. Residues 909 to 927 traverse the membrane as a helical segment; it reads VKILRVLRVLRPLRAINRA. The Cytoplasmic portion of the chain corresponds to 928-946; the sequence is KGLKHVVQCMFVAIKTIGN. Residues 947-966 form a helical membrane-spanning segment; it reads IVLVTMLLDFMFACIGVQLF. Over 967–1056 the chain is Extracellular; it reads KGKLYYCTDP…TGPLYNNRVG (90 aa). The tract at residues 1004-1093 is dihydropyridine binding; the sequence is RMWVNSDFNF…FQKQGEQEYK (90 aa). The helical transmembrane segment at 1057 to 1081 threads the bilayer; sequence ISIFFIIYIIIIAFFMMNIFVGFVI. Residues 1082–1134 are Cytoplasmic-facing; the sequence is VTFQKQGEQEYKDCELDKNQRQCVQYALKARPLKCYIPKNPHQYRVWYFVTSC. One copy of the IV repeat lies at 1121–1405; the sequence is NPHQYRVWYF…LFVAIIMDNV (285 aa). Residues 1135–1153 traverse the membrane as a helical segment; it reads YFEYLMFFLIMLNTLCLGI. At 1154-1168 the chain is on the extracellular side; that stretch reads QHCNQSDHITKLSDT. Asn1157 is a glycosylation site (N-linked (GlcNAc...) asparagine). A helical membrane pass occupies residues 1169-1188; that stretch reads LNLIFTVLFTGEMIVKLIAF. The Cytoplasmic portion of the chain corresponds to 1189 to 1196; the sequence is KAKGYFGD. A helical transmembrane segment spans residues 1197–1215; that stretch reads PWNVFDFIIVVGSIVDVVL. Topologically, residues 1216–1252 are extracellular; the sequence is SEVDAALEARGGLWCLHGCAEVNPMQAIAEAENVRVS. A helical membrane pass occupies residues 1253-1271; sequence ITFFRLFRVLRLIKLLNRS. Residues 1272 to 1290 lie on the Cytoplasmic side of the membrane; it reads EGIRNLLWTFIKSFQALPH. Residues 1291–1310 traverse the membrane as a helical segment; that stretch reads VGLLIVMLFFIYAVIGMQMF. At 1311–1377 the chain is on the extracellular side; that stretch reads GKVALVDGTE…GEEYTCGSSI (67 aa). The tract at residues 1358–1424 is dihydropyridine binding; that stretch reads LCDAKSDYGP…LGPHHLDEFK (67 aa). Positions 1370–1413 are phenylalkylamine binding; that stretch reads EYTCGSSIAVFYFLSFYILCAFLIINLFVAIIMDNVDYLTRDWS. Residues 1378–1402 traverse the membrane as a helical segment; sequence AVFYFLSFYILCAFLIINLFVAIIM. Residues 1403 to 1852 are Cytoplasmic-facing; sequence DNVDYLTRDW…TKPKENTSAV (450 aa). The EF-hand domain occupies 1418–1453; it reads HHLDEFKKIWAEYDPEATGRIKHLDVVTLLRRIQPP. 5 residues coordinate Ca(2+): Asp1431, Glu1433, Thr1435, Arg1437, and Asp1442. A disordered region spans residues 1820 to 1852; sequence NRQSGKVTKRKRRPIPVPPGTKSTKPKENTSAV.

It belongs to the calcium channel alpha-1 subunit (TC 1.A.1.11) family. Multisubunit complex consisting of alpha-1, alpha-2, beta and delta subunits in a 1:1:1:1 ratio. The channel activity is directed by the pore-forming and voltage-sensitive alpha-1 subunit. In many cases, this subunit is sufficient to generate voltage-sensitive calcium channel activity. The auxiliary subunits beta and alpha-2/delta linked by a disulfide bridge regulate the channel activity. An additional gamma subunit is present only in skeletal muscle L-type channel. Post-translationally, may be non-phosphorylated. As to expression, skeletal muscle.

It is found in the membrane. Voltage-sensitive calcium channels (VSCC) mediate the entry of calcium ions into excitable cells and are also involved in a variety of calcium-dependent processes, including muscle contraction, gene expression, cell motility, cell division and cell death. The isoform alpha-1S gives rise to L-type calcium currents. Long-lasting (L-type) calcium channels belong to the 'high-voltage activated' (HVA) group. They are blocked by dihydropyridines (DHP), phenylalkylamines, and by benzothiazepines. Calcium channels containing the alpha-1S subunit play an important role in excitation-contraction coupling in skeletal muscle. The sequence is that of Dihydropyridine-sensitive L-type skeletal muscle calcium channel subunit alpha-1 from Cyprinus carpio (Common carp).